We begin with the raw amino-acid sequence, 262 residues long: Phycoerythrobilin:ferredoxin oxidoreductase (262 aa).

This sequence belongs to the HY2 family.

It carries out the reaction (3Z)-phycoerythrobilin + oxidized 2[4Fe-4S]-[ferredoxin] = 15,16-dihydrobiliverdin + reduced 2[4Fe-4S]-[ferredoxin] + 2 H(+). Its function is as follows. Catalyzes the two-electron reduction of the C2 and C3(1) diene system of 15,16-dihydrobiliverdin. This is Phycoerythrobilin:ferredoxin oxidoreductase from Synechococcus sp. (strain RCC307).